The primary structure comprises 120 residues: Reprimo-like protein (120 aa).

The chain crosses the membrane as a helical span at residues 67 to 87; it reads VAQIAVLCVLSLTVVFGVFFL. Position 109 is a phosphoserine (S109).

Belongs to the reprimo family.

The protein localises to the membrane. This is Reprimo-like protein (RPRML) from Homo sapiens (Human).